The sequence spans 89 residues: Small ribosomal subunit protein bS20 (89 aa).

Belongs to the bacterial ribosomal protein bS20 family.

Binds directly to 16S ribosomal RNA. This is Small ribosomal subunit protein bS20 from Stenotrophomonas maltophilia (strain K279a).